The following is a 1589-amino-acid chain: Polyhomeotic-proximal chromatin protein (1589 aa).

The span at 1–15 (MDRRALKFMQKRADT) shows a compositional bias: basic and acidic residues. 5 disordered regions span residues 1–85 (MDRR…GGKQ), 107–174 (KYDV…NCNS), 252–290 (LQQQ…STAI), 1112–1244 (LSTA…STTT), and 1260–1294 (AVST…NGSK). 3 stretches are compositionally biased toward low complexity: residues 18-28 (DTTTPVSTTAS), 60-80 (NHNN…QQQQ), and 119-139 (AQQQ…VTPT). Polar residues predominate over residues 154–174 (HTPSTPNRPSAPSTPNTNCNS). Over residues 260–271 (NGGGAASAGAGG) the composition is skewed to gly residues. Residues 272–285 (AASPANSQQSQQQQ) are compositionally biased toward low complexity. S1145 is subject to Phosphoserine. A Phosphothreonine modification is found at T1148. A compositionally biased stretch (low complexity) spans 1157-1180 (TTPKSSTPATVSASVEASSSTGEA). The span at 1189–1221 (RSSTPSKGATTPTSKQSNAAVQPPSSTTPNSVS) shows a compositional bias: polar residues. Low complexity-rich tracts occupy residues 1230 to 1244 (TCGS…STTT) and 1260 to 1290 (AVST…SSIS). The segment at 1356–1389 (SAPGSDMVACEQCGKMEHKAKLKRKRYCSPGCSR) adopts an FCS-type zinc-finger fold. Residues C1365, C1368, C1383, and C1387 each coordinate Zn(2+). Residues 1513 to 1577 (WSVDDVSNFI…VAKVESIKEV (65 aa)) enclose the SAM domain.

As to quaternary structure, component of PRC1 complex, which contains many PcG proteins like Pc, ph, Scm, Psc, Sce and also chromatin-remodeling proteins such as histone deacetylases. This complex is distinct from the Esc/E(z) complex, at least composed of esc, E(z), Su(z)12, HDAC1/Rpd3 and Caf1-55. The 2 complexes however cooperate and interact together during the first 3 hours of development to establish PcG silencing. Interacts with the SAM domain of Scm via its SAM domain in vitro. Interacts with Trl in vivo and with corto in vitro. In terms of tissue distribution, salivary glands.

It is found in the nucleus. Its function is as follows. Polycomb group (PcG) protein. PcG proteins act by forming multiprotein complexes, which are required to maintain the transcriptionally repressive state of homeotic genes throughout development. PcG proteins are not required to initiate repression, but to maintain it during later stages of development. Component of the PcG multiprotein PRC1 complex, a complex that acts via chromatin remodeling and modification of histones; it mediates monoubiquitination of histone H2A 'Lys-118', rendering chromatin heritably changed in its expressibility. Plays a role in regulating the expression of other pair-rule genes such as eve, ftz, and H. The polypeptide is Polyhomeotic-proximal chromatin protein (ph-p) (Drosophila melanogaster (Fruit fly)).